We begin with the raw amino-acid sequence, 248 residues long: UPF0246 protein A1I_02510 (248 aa).

This sequence belongs to the UPF0246 family.

This is UPF0246 protein A1I_02510 from Rickettsia bellii (strain OSU 85-389).